A 572-amino-acid polypeptide reads, in one-letter code: Glypican-5 (572 aa).

Positions 1 to 24 (MDAQTWPVGFRCLLLLALVGSARS) are cleaved as a signal peptide. 2 N-linked (GlcNAc...) asparagine glycosylation sites follow: asparagine 120 and asparagine 237. The disordered stretch occupies residues 355 to 375 (SPRCSFDQSKEKHGMKTTTRN). Residues serine 441, serine 486, serine 495, serine 507, and serine 509 are each glycosylated (O-linked (Xyl...) (glycosaminoglycan) serine). A glycan (N-linked (GlcNAc...) asparagine) is linked at asparagine 527.

Belongs to the glypican family. As to expression, in adult, primarily expressed in the brain. Also detected in fetal brain, lung and liver.

It localises to the cell membrane. The protein localises to the secreted. It is found in the extracellular space. Cell surface proteoglycan that bears heparan sulfate. The chain is Glypican-5 (GPC5) from Homo sapiens (Human).